The primary structure comprises 449 residues: MPPKVKIKNDFEIFRKELEILYKKYLNNELSYLKLKEKLKILAENHKAILFRKDKFTNRSIILNLSKTRKIIKEYINLSVIERIRRDNTFLFFWKSRRIKELKNIGIKDRKKIEELIFSNQMNDEKSYFQYFIDLFVTPKWLNDYAHKYKIEKINSYRKEQIFVKINLNTYIEIIKLLLNQSRDIRLKFYGVLMAIGRRPVEVMKLSQFYIADKNHIRMEFIAKKRENNIVNEVVFPVFADPELIINSIKEIRYMEQTENLTKEIISSNLAYSYNRLFRQIFNNIFAPEESVYFCRAIYCKFSYLAFAPKNMEMNYWITKVLGHEPNDITTAFHYNRYVLDNLDDKADNSLLTLLNQRIYTYVRRKATYSTLTMDRLESLIKEHHIFDDNYIKTLIVIKNLMLKDNLETLAMVRGLNVKIRKAFKATYGYNYNYIKLTEYLSIIFNYKL.

It depends on No cofactors were found to be necessary. as a cofactor.

The protein resides in the cytoplasm. Its subcellular location is the nucleoid. Functionally, catalyzes the conservative, sequence-specific DNA breakage and reunion reaction that generates two hairpin telomeres from a replicated telomere substrate. Breaks two phosphodiester bonds in a single DNA duplex and joins each end with the opposite DNA strand to form covalently closed hairpin telomeres. In vitro relaxed-circular, open-circular and linearized plasmids, but not supercoiled DNA, are all substrates. Cleavage is position-dependent relative to conserved sequence elements. This chain is Telomere resolvase ResT, found in Borreliella burgdorferi (strain ATCC 35210 / DSM 4680 / CIP 102532 / B31) (Borrelia burgdorferi).